The following is a 119-amino-acid chain: Flagellar transcriptional regulator FlhD (119 aa).

The protein belongs to the FlhD family. As to quaternary structure, homodimer; disulfide-linked. Forms a heterohexamer composed of two FlhC and four FlhD subunits. Each FlhC binds a FlhD dimer, forming a heterotrimer, and a hexamer assembles by dimerization of two heterotrimers.

The protein localises to the cytoplasm. Its function is as follows. Functions in complex with FlhC as a master transcriptional regulator that regulates transcription of several flagellar and non-flagellar operons by binding to their promoter region. Activates expression of class 2 flagellar genes, including fliA, which is a flagellum-specific sigma factor that turns on the class 3 genes. Also regulates genes whose products function in a variety of physiological pathways. This Pectobacterium atrosepticum (strain SCRI 1043 / ATCC BAA-672) (Erwinia carotovora subsp. atroseptica) protein is Flagellar transcriptional regulator FlhD.